The chain runs to 292 residues: Retinal homeobox protein Rx3 (292 aa).

The disordered stretch occupies residues 1 to 27 (MRLVGSQYKDMEDRLSPSARLVRSPGS). An Octapeptide motif motif is present at residues 32–39 (HSIESILG). 2 disordered regions span residues 53–72 (GSGK…DSNK) and 85–107 (SPDL…KKHR). Composition is skewed to basic and acidic residues over residues 57 to 72 (TGKD…DSNK) and 92 to 102 (DGGKLSDDENP). Residues 106-165 (HRRNRTTFTTFQLHELERAFEKSHYPDVYSREELALKVNLPEVRVQVWFQNRRAKWRRQE) constitute a DNA-binding region (homeobox). The short motif at 272-285 (TSIASLRMKAKEHI) is the OAR element. The Nuclear localization signal signature appears at 278-282 (RMKAK).

It belongs to the paired homeobox family. Bicoid subfamily.

Its subcellular location is the nucleus. Functionally, plays a critical role in eye formation by regulating the initial specification of retinal cells and/or their subsequent proliferation. The protein is Retinal homeobox protein Rx3 (rx3) of Danio rerio (Zebrafish).